Reading from the N-terminus, the 465-residue chain is Cysteine--tRNA ligase (465 aa).

Residue C27 coordinates Zn(2+). The 'HIGH' region signature appears at 29 to 39 (PTVYDDAHLGH). Residues C207, H237, and E241 each contribute to the Zn(2+) site. The 'KMSKS' region motif lies at 269–273 (KMSKS). Residue K272 participates in ATP binding.

The protein belongs to the class-I aminoacyl-tRNA synthetase family. In terms of assembly, monomer. Requires Zn(2+) as cofactor.

It localises to the cytoplasm. The enzyme catalyses tRNA(Cys) + L-cysteine + ATP = L-cysteinyl-tRNA(Cys) + AMP + diphosphate. The sequence is that of Cysteine--tRNA ligase from Helicobacter pylori (strain P12).